Here is a 190-residue protein sequence, read N- to C-terminus: Anthranilate synthase component 2 (190 aa).

The region spanning 1-190 (MILLIDNYDS…ILQNFINCLN (190 aa)) is the Glutamine amidotransferase type-1 domain. An L-glutamine-binding site is contributed by 52–54 (CPG). The Nucleophile; for GATase activity role is filled by Cys79. Residues Gln83 and 129–130 (SL) contribute to the L-glutamine site. Catalysis depends on residues His169 and Glu171.

In terms of assembly, tetramer of two components I and two components II.

Its subcellular location is the plastid. It is found in the cyanelle. The enzyme catalyses chorismate + L-glutamine = anthranilate + pyruvate + L-glutamate + H(+). Its pathway is amino-acid biosynthesis; L-tryptophan biosynthesis; L-tryptophan from chorismate: step 1/5. This chain is Anthranilate synthase component 2 (trpG), found in Cyanophora paradoxa.